A 454-amino-acid chain; its full sequence is Putative tyrosine kinase 36 (454 aa).

ATP-binding positions include 80–88 and Lys-98; that span reads LGSGSFGKV. Asp-192 serves as the catalytic Proton acceptor.

This sequence belongs to the protein kinase superfamily. Tyr protein kinase family.

The catalysed reaction is L-tyrosyl-[protein] + ATP = O-phospho-L-tyrosyl-[protein] + ADP + H(+). The chain is Putative tyrosine kinase 36 (36) from Alcelaphine herpesvirus 1 (strain C500) (AlHV-1).